The primary structure comprises 650 residues: Protein KINESIN LIGHT CHAIN-RELATED 3 (650 aa).

The disordered stretch occupies residues glutamate 104–serine 141. Residues lysine 131 to serine 141 show a composition bias toward polar residues. TPR repeat units lie at residues isoleucine 192–glutamate 225, phenylalanine 235–valine 268, glycine 277–serine 310, alanine 319–glycine 353, alanine 359–alanine 392, glycine 401–histidine 434, alanine 444–serine 477, alanine 485–threonine 518, glycine 527–glutamate 560, and leucine 569–lysine 602.

The protein belongs to the kinesin light chain family.

The sequence is that of Protein KINESIN LIGHT CHAIN-RELATED 3 from Arabidopsis thaliana (Mouse-ear cress).